The primary structure comprises 268 residues: Ribosomal RNA small subunit methyltransferase A (268 aa).

S-adenosyl-L-methionine is bound by residues Asn23, Ile25, Gly50, Glu72, Asp97, and Asn116.

The protein belongs to the class I-like SAM-binding methyltransferase superfamily. rRNA adenine N(6)-methyltransferase family. RsmA subfamily.

The protein localises to the cytoplasm. The catalysed reaction is adenosine(1518)/adenosine(1519) in 16S rRNA + 4 S-adenosyl-L-methionine = N(6)-dimethyladenosine(1518)/N(6)-dimethyladenosine(1519) in 16S rRNA + 4 S-adenosyl-L-homocysteine + 4 H(+). Functionally, specifically dimethylates two adjacent adenosines (A1518 and A1519) in the loop of a conserved hairpin near the 3'-end of 16S rRNA in the 30S particle. May play a critical role in biogenesis of 30S subunits. This is Ribosomal RNA small subunit methyltransferase A from Rickettsia bellii (strain OSU 85-389).